The chain runs to 105 residues: MKFLALFFLALVGVAFAYDGGMDGMDMIKSYSILGAMIGLGIAAFGGAIGMGNAAAATITGTARNPGVGGKLLTTMFVAMAMIEAQVIYTLVFAIIAIYSNPFLS.

3 helical membrane-spanning segments follow: residues 3–23, 32–52, and 78–98; these read FLALFFLALVGVAFAYDGGMD, SILGAMIGLGIAAFGGAIGMG, and VAMAMIEAQVIYTLVFAIIAI.

This sequence belongs to the ATPase C chain family. As to quaternary structure, F-type ATPases have 2 components, F(1) - the catalytic core - and F(0) - the membrane proton channel. F(1) has five subunits: alpha(3), beta(3), gamma(1), delta(1), epsilon(1). F(0) has three main subunits: a(1), b(2) and c(10-14). The alpha and beta chains form an alternating ring which encloses part of the gamma chain. F(1) is attached to F(0) by a central stalk formed by the gamma and epsilon chains, while a peripheral stalk is formed by the delta and b chains.

The protein resides in the cell inner membrane. In terms of biological role, f(1)F(0) ATP synthase produces ATP from ADP in the presence of a proton or sodium gradient. F-type ATPases consist of two structural domains, F(1) containing the extramembraneous catalytic core and F(0) containing the membrane proton channel, linked together by a central stalk and a peripheral stalk. During catalysis, ATP synthesis in the catalytic domain of F(1) is coupled via a rotary mechanism of the central stalk subunits to proton translocation. Functionally, key component of the F(0) channel; it plays a direct role in translocation across the membrane. A homomeric c-ring of between 10-14 subunits forms the central stalk rotor element with the F(1) delta and epsilon subunits. In Helicobacter acinonychis (strain Sheeba), this protein is ATP synthase subunit c.